Reading from the N-terminus, the 319-residue chain is Non-homologous end joining protein Ku (319 aa).

Positions 10-188 constitute a Ku domain; that stretch reads ISFGLVTVPI…PQGIELSEDE (179 aa). Positions 252-319 are disordered; the sequence is QSVAKAKASR…TTPKKPRRSA (68 aa). Residues 260–274 show a composition bias toward basic and acidic residues; that stretch reads SRGESGEADVHELPR. The span at 305–319 shows a compositional bias: basic residues; that stretch reads TAAKKTTPKKPRRSA.

The protein belongs to the prokaryotic Ku family. Homodimer. Interacts with LigD.

Its function is as follows. With LigD forms a non-homologous end joining (NHEJ) DNA repair enzyme, which repairs dsDNA breaks with reduced fidelity. Binds linear dsDNA with 5'- and 3'- overhangs but not closed circular dsDNA nor ssDNA. Recruits and stimulates the ligase activity of LigD. The sequence is that of Non-homologous end joining protein Ku from Streptomyces avermitilis (strain ATCC 31267 / DSM 46492 / JCM 5070 / NBRC 14893 / NCIMB 12804 / NRRL 8165 / MA-4680).